The following is a 497-amino-acid chain: Carboxylesterase (497 aa).

Ser-185 acts as the Acyl-ester intermediate in catalysis. Active-site charge relay system residues include Glu-319 and His-415.

The protein belongs to the type-B carboxylesterase/lipase family.

It is found in the secreted. It carries out the reaction a carboxylic ester + H2O = an alcohol + a carboxylate + H(+). This Thermobifida fusca (Thermomonospora fusca) protein is Carboxylesterase.